The following is a 738-amino-acid chain: DNA topoisomerase 4 subunit A (738 aa).

One can recognise a Topo IIA-type catalytic domain in the interval 32-496 (LPDVRDGLKP…SFEEVDLTNQ (465 aa)). Tyr-120 functions as the O-(5'-phospho-DNA)-tyrosine intermediate in the catalytic mechanism.

Belongs to the type II topoisomerase GyrA/ParC subunit family. ParC type 1 subfamily. Heterotetramer composed of ParC and ParE.

The protein localises to the cell membrane. It catalyses the reaction ATP-dependent breakage, passage and rejoining of double-stranded DNA.. In terms of biological role, topoisomerase IV is essential for chromosome segregation. It relaxes supercoiled DNA. Performs the decatenation events required during the replication of a circular DNA molecule. The polypeptide is DNA topoisomerase 4 subunit A (Rickettsia prowazekii (strain Madrid E)).